Reading from the N-terminus, the 208-residue chain is MTGKKRSASSSRWLQEHFSDKYVQQAQKKGLRSRAWFKLDEIQQSDKLFKPGMTVVDLGAAPGGWSQYVVTQIGGKGRIIACDLLPMDPIVGVDFLQGDFRDELVMKALLERVGDSKVQVVMSDMAPNMSGTPAVDIPRAMYLVELALEMCRDVLAPGGSFVVKVFQGEGFDEYLREIRSLFTKVKVRKPDSSRARSREVYIVATGRK.

Positions 63, 65, 83, 99, and 124 each coordinate S-adenosyl-L-methionine. The active-site Proton acceptor is the Lys-164.

The protein belongs to the class I-like SAM-binding methyltransferase superfamily. RNA methyltransferase RlmE family.

Its subcellular location is the cytoplasm. The enzyme catalyses uridine(2552) in 23S rRNA + S-adenosyl-L-methionine = 2'-O-methyluridine(2552) in 23S rRNA + S-adenosyl-L-homocysteine + H(+). Functionally, specifically methylates the uridine in position 2552 of 23S rRNA at the 2'-O position of the ribose in the fully assembled 50S ribosomal subunit. The chain is Ribosomal RNA large subunit methyltransferase E from Salmonella agona (strain SL483).